Reading from the N-terminus, the 378-residue chain is Sphingosine 1-phosphate receptor 3 (378 aa).

Topologically, residues 1 to 44 are extracellular; that stretch reads MATTHAQGHQPVLGNDTLREHYDYVGKLAGRLRDPPEGGTLITT. The N-linked (GlcNAc...) asparagine glycan is linked to asparagine 15. A helical membrane pass occupies residues 45 to 65; the sequence is ILFLVTCSFIVLENLMVLIAI. At 66 to 74 the chain is on the cytoplasmic side; it reads WKNNKFHNR. A helical membrane pass occupies residues 75–95; the sequence is MYFFIGNLALCDLLAGIAYKV. Topologically, residues 96-115 are extracellular; sequence NILMSGRKTFSLSPTVWFLR. Residues 116–136 traverse the membrane as a helical segment; it reads EGSMFVALGASTCSLLAIAIE. At 137–154 the chain is on the cytoplasmic side; it reads RHLTMIKMRPYDANKKHR. Residues 155 to 175 form a helical membrane-spanning segment; that stretch reads VFLLIGMCWLIAFSLGALPIL. At 176–196 the chain is on the extracellular side; sequence GWNCLENFPDCSTILPLYSKK. A helical transmembrane segment spans residues 197–217; that stretch reads YIAFLISIFTAILVTIVILYA. Residues 218–244 are Cytoplasmic-facing; it reads RIYCLVKSSSRRVANHNSERSMALLRT. Residues 245-265 traverse the membrane as a helical segment; that stretch reads VVIVVSVFIACWSPLFILFLI. Over 266-281 the chain is Extracellular; that stretch reads DVACRAKECSILFKSQ. Residues 282-302 form a helical membrane-spanning segment; it reads WFIMLAVLNSAMNPVIYTLAS. The Cytoplasmic portion of the chain corresponds to 303–378; sequence KEMRRAFFRL…RSFQNGVLCK (76 aa). The disordered stretch occupies residues 323–354; sequence TQASPMQPALDPSRSKSSSSNNSSHSPKVKED. Residue serine 326 is modified to Phosphoserine. The segment covering 337–348 has biased composition (low complexity); that stretch reads SKSSSSNNSSHS.

This sequence belongs to the G-protein coupled receptor 1 family. Most abundant in heart, lung, kidney and spleen; low but detectable in brain, thymus, muscle and testis; and nearly undetectable in liver, stomach, and intestine. Expressed in embryonic lung from embryonic day 14-18. Also abundantly detected in embryonic nasal cartilage, sphenoid bone, vena cava, Meckel's cartilage/incisor teeth, genital tubercle and bladder.

It is found in the cell membrane. Its function is as follows. Receptor for the lysosphingolipid sphingosine 1-phosphate (S1P). S1P is a bioactive lysophospholipid that elicits diverse physiological effect on most types of cells and tissues. The chain is Sphingosine 1-phosphate receptor 3 (S1pr3) from Mus musculus (Mouse).